A 232-amino-acid polypeptide reads, in one-letter code: Ribonuclease 3 (232 aa).

The RNase III domain occupies 5–134 (QTVLKNHFEI…FLGALLLDKD (130 aa)). Glu-47 provides a ligand contact to Mg(2+). Residue Asp-51 is part of the active site. Residues Asp-120 and Glu-123 each contribute to the Mg(2+) site. Glu-123 is an active-site residue. The DRBM domain occupies 160–229 (DYKTHLQELL…AKNAVEKGLD (70 aa)).

Belongs to the ribonuclease III family. Homodimer. The cofactor is Mg(2+).

It is found in the cytoplasm. It carries out the reaction Endonucleolytic cleavage to 5'-phosphomonoester.. In terms of biological role, digests double-stranded RNA. Involved in the processing of primary rRNA transcript to yield the immediate precursors to the large and small rRNAs (23S and 16S). Processes some mRNAs, and tRNAs when they are encoded in the rRNA operon. Processes pre-crRNA and tracrRNA of type II CRISPR loci if present in the organism. This is Ribonuclease 3 from Streptococcus pneumoniae (strain ATCC BAA-255 / R6).